Here is a 705-residue protein sequence, read N- to C-terminus: MSGSIDVITHFGPDADKPEIITALENLTKLHALSVEDLYIKWEQFSNQRRQTHTDLTSKNIDEFKQFLQLQMEKRANQISSSSKVNTSTKKPVIKKSLNSSPLFGLSIPKTPTLKKRKLHGPFSLSDSKQTYNVGSEAETNEKGNSSLKLEFTPGMAEDAVGDSAPLSHAKSSDAKTPGSSTFQTPTTNTPTTSRQNVPAGEILDSLNPENIEISSGNPNVGLLSTEEPSYNQVKVEPFYDAKKYKFRTMRQNLQEASDVLDDQIESFTKIIQNHYKLSPNDFADPTIQSQSEIYAVGRIVPDSPTYDKFLNPESLSLETSRMGGVGRRVRLDLSQVNELSFFLGQIVAFKGKNANGDYFTVNSILPLPYPNSPVSTSQELQEFQANLEGSSLKVIVTCGPYFANDNFSLELLQEFIDSINNEVKPHVLIMFGPFIDITHPLIASGKLPNFPQFKTQPKTLDELFLKLFTPILKTISPHIQTVLIPSTKDAISNHAAYPQASLIRKALQLPKRNFKCMANPSSFQINEIYFGCSNVDTFKDLKEVIKGGTTSSRYRLDRVSEHILQQRRYYPIFPGSIRTRIKPKDVSTKKETNDMESKEEKVYEHISGADLDVSYLGLTEFVGGFSPDIMIIPSELQHFARVVQNVVVINPGRFIRATGNRGSYAQITVQCPDLEDGKLTLVEGEEPVYLHNVWKRARVDLIAS.

The tract at residues Lys-115 to Pro-199 is disordered. The span at Leu-125 to Val-134 shows a compositional bias: polar residues. Residue Ser-126 is modified to Phosphoserine. A compositionally biased stretch (low complexity) spans Ser-181–Asn-197.

This sequence belongs to the DNA polymerase alpha subunit B family. DNA polymerase alpha:primase is a four subunit enzyme complex, which is assembled throughout the cell cycle, and consists of the two DNA polymerase subunits A POL1 and B POL12, and the DNA primase large PRI2 and small PRI1 subunits. Subunit B POL12 binds to subunit A POL1. Post-translationally, phosphorylated in a cell cycle-dependent manner.

Its subcellular location is the nucleus. Functionally, non-catalytic component of DNA polymerase alpha, which in a complex with DNA primase (DNA polymerase alpha:primase) constitutes a replicative polymerase. POL12 may play an essential role at the early stage of chromosomal DNA replication by coupling DNA polymerase alpha to the cellular replication machinery. Interacts with MCM10. This Saccharomyces cerevisiae (strain ATCC 204508 / S288c) (Baker's yeast) protein is DNA polymerase alpha subunit B (POL12).